Consider the following 393-residue polypeptide: Sugar efflux transporter B (393 aa).

Transmembrane regions (helical) follow at residues 13-33 (FDLT…AGAL), 51-71 (AMVG…SQFL), 82-102 (KSLI…FAWN), 106-126 (FVLL…NPQM), 152-172 (VSLA…GFSF), 174-194 (VMYL…WLFL), 219-239 (LLLF…IINM), 253-273 (LAGV…LIAG), 283-303 (FLMR…LMAH), 306-326 (VILL…GGIG), 344-364 (LYTN…GIVA), and 366-386 (IWNY…TLFC).

This sequence belongs to the major facilitator superfamily. Set transporter family.

It is found in the cell inner membrane. Functionally, involved in the efflux of sugars. The physiological role may be the detoxification of non-metabolizable sugar analogs. Can transport lactose and glucose. This Escherichia coli (strain K12) protein is Sugar efflux transporter B (setB).